An 825-amino-acid chain; its full sequence is Zygotic DNA replication licensing factor mcm6-B (825 aa).

Residues 159–186 form a C4-type zinc finger; the sequence is CLDCQTLVRDVEQQFKYTQPSICRNPVC. One can recognise an MCM domain in the interval 347–554; the sequence is LYHNLCTSLF…TDYAIARRIV (208 aa). 397-404 contributes to the ATP binding site; it reads GDPSTAKS. The short motif at 529 to 532 is the Arginine finger element; that stretch reads SRFD. Acidic residues predominate over residues 668–679; sequence DQEDEHEVEEPQ. The interval 668-690 is disordered; that stretch reads DQEDEHEVEEPQEGINGDADVPN.

The protein belongs to the MCM family. Component of the mcm2-7 complex (RLF-M). The complex forms a toroidal hexameric ring with the proposed subunit order mcm2-mcm6-mcm4-mcm7-mcm3-mcm5 (By simililarity). Begins to associate with zmcm3, mcm4 and mcm7 into mcm complexes at the neurula stage.

The protein resides in the nucleus. It catalyses the reaction ATP + H2O = ADP + phosphate + H(+). Acts as a component of the mcm2-7 complex (mcm complex) which is the putative replicative helicase essential for 'once per cell cycle' DNA replication initiation and elongation in eukaryotic cells. The active ATPase sites in the mcm2-7 ring are formed through the interaction surfaces of two neighboring subunits such that a critical structure of a conserved arginine finger motif is provided in trans relative to the ATP-binding site of the Walker A box of the adjacent subunit. The six ATPase active sites, however, are likely to contribute differentially to the complex helicase activity. The existence of maternal and zygotic forms of mcm3 and mcm6 suggests that specific forms of mcm2-7 complexes may be used during different stages of development. May replace mmcm6 in the mcm2-7 complex. The polypeptide is Zygotic DNA replication licensing factor mcm6-B (zmcm6-b) (Xenopus laevis (African clawed frog)).